We begin with the raw amino-acid sequence, 340 residues long: Uroporphyrinogen decarboxylase (340 aa).

Substrate is bound by residues 21–25 (RQAGR), aspartate 71, tyrosine 148, serine 203, and histidine 316.

Belongs to the uroporphyrinogen decarboxylase family. In terms of assembly, homodimer.

It localises to the cytoplasm. It catalyses the reaction uroporphyrinogen III + 4 H(+) = coproporphyrinogen III + 4 CO2. The protein operates within porphyrin-containing compound metabolism; protoporphyrin-IX biosynthesis; coproporphyrinogen-III from 5-aminolevulinate: step 4/4. In terms of biological role, catalyzes the decarboxylation of four acetate groups of uroporphyrinogen-III to yield coproporphyrinogen-III. This is Uroporphyrinogen decarboxylase from Campylobacter jejuni subsp. jejuni serotype O:6 (strain 81116 / NCTC 11828).